The chain runs to 317 residues: Methionyl-tRNA formyltransferase (317 aa).

113–116 (SLLP) contacts (6S)-5,6,7,8-tetrahydrofolate.

This sequence belongs to the Fmt family.

The enzyme catalyses L-methionyl-tRNA(fMet) + (6R)-10-formyltetrahydrofolate = N-formyl-L-methionyl-tRNA(fMet) + (6S)-5,6,7,8-tetrahydrofolate + H(+). Its function is as follows. Attaches a formyl group to the free amino group of methionyl-tRNA(fMet). The formyl group appears to play a dual role in the initiator identity of N-formylmethionyl-tRNA by promoting its recognition by IF2 and preventing the misappropriation of this tRNA by the elongation apparatus. The polypeptide is Methionyl-tRNA formyltransferase (Pseudomonas fluorescens (strain SBW25)).